The following is a 98-amino-acid chain: HssA/B-like protein 34 (98 aa).

Disordered regions lie at residues 1 to 26 and 60 to 98; these read MTLF…SFGS and AKSS…SCSC. Over residues 60 to 72 the composition is skewed to gly residues; the sequence is AKSSGGSCGGKGG. Basic residues predominate over residues 73–88; it reads SHNHGHGHGHGPHGHG. Residues 89–98 show a composition bias toward gly residues; the sequence is GKGSGGSCSC.

Belongs to the hssA/B family.

The protein is HssA/B-like protein 34 (hssl34) of Dictyostelium discoideum (Social amoeba).